We begin with the raw amino-acid sequence, 337 residues long: tRNA N6-adenosine threonylcarbamoyltransferase (337 aa).

Residues H111 and H115 each coordinate Fe cation. Substrate contacts are provided by residues 134–138 (LVSGG), D167, G180, and N272. Residue D300 participates in Fe cation binding.

This sequence belongs to the KAE1 / TsaD family. Fe(2+) is required as a cofactor.

The protein resides in the cytoplasm. The catalysed reaction is L-threonylcarbamoyladenylate + adenosine(37) in tRNA = N(6)-L-threonylcarbamoyladenosine(37) in tRNA + AMP + H(+). In terms of biological role, required for the formation of a threonylcarbamoyl group on adenosine at position 37 (t(6)A37) in tRNAs that read codons beginning with adenine. Is involved in the transfer of the threonylcarbamoyl moiety of threonylcarbamoyl-AMP (TC-AMP) to the N6 group of A37, together with TsaE and TsaB. TsaD likely plays a direct catalytic role in this reaction. The polypeptide is tRNA N6-adenosine threonylcarbamoyltransferase (Escherichia coli O45:K1 (strain S88 / ExPEC)).